The chain runs to 469 residues: Properdin (469 aa).

An N-terminal signal peptide occupies residues 1–27 (MITEGAQAPRLLLPPLLLLLTLPATGS). TSP type-1 domains are found at residues 28-76 (DPVL…QPCR), 77-134 (SPRW…QCCP), 136-191 (MGGW…QSCP), 193-255 (HGAW…PPCP), 257-313 (AGSW…VPCP), 315-377 (DGEW…QHCP), and 379-462 (KGSW…PACK). Disulfide bonds link Cys-32–Cys-56, Cys-43–Cys-72, and Cys-57–Cys-75. C-linked (Man) tryptophan glycans are attached at residues Trp-83 and Trp-86. 7 disulfides stabilise this stretch: Cys-89–Cys-127, Cys-93–Cys-133, Cys-104–Cys-111, Cys-132–Cys-170, Cys-148–Cys-184, Cys-152–Cys-190, and Cys-163–Cys-174. Trp-139, Trp-142, and Trp-145 each carry a C-linked (Man) tryptophan glycan. O-linked (Fuc...) threonine glycosylation occurs at Thr-151. Trp-196, Trp-199, and Trp-202 each carry a C-linked (Man) tryptophan glycan. 3 cysteine pairs are disulfide-bonded: Cys-205/Cys-248, Cys-209/Cys-254, and Cys-224/Cys-238. A glycan (O-linked (Fuc...) serine) is linked at Ser-208. A disordered region spans residues 218–238 (ETRSRKCSAPEPSQKPPGKPC). Residues Trp-260 and Trp-263 are each glycosylated (C-linked (Man) tryptophan). Disulfide bonds link Cys-269/Cys-306, Cys-273/Cys-312, and Cys-284/Cys-296. O-linked (Fuc...) threonine glycosylation occurs at Thr-272. 2 C-linked (Man) tryptophan glycosylation sites follow: Trp-321 and Trp-324. Intrachain disulfides connect Cys-327-Cys-370, Cys-337-Cys-376, and Cys-350-Cys-360. Positions 351-359 (KGRKFDGHR) are interaction with Complement C3 beta chain. C-linked (Man) tryptophan glycosylation is found at Trp-382, Trp-385, and Trp-388. Intrachain disulfides connect Cys-391-Cys-455, Cys-395-Cys-461, and Cys-407-Cys-439. Asn-428 carries N-linked (GlcNAc...) asparagine glycosylation.

As to quaternary structure, in plasma, properdin exists as dimers, trimers or tetramers in the relative proportions of 26:54:20. Interacts with the pro-C3-convertase enzyme complex (C3b-Bb) comprised of Complement C3 beta chain (C3b) and the Complement factor B Bb fragment (Bb), where it binds (via its TSP type-1 5 domain) with C3b and Bb. This interaction stabilizes the complex and allows it to become the active C3-convertase enzyme complex (C3b-Bb-FP). Interacts with C3b. Interacts with CFB.

Its subcellular location is the secreted. A positive regulator of the alternate pathway of complement. It binds to and stabilizes the C3- and C5-convertase enzyme complexes. Inhibits CFI-CFH mediated degradation of Inhibits CFI-CFH mediated degradation of Complement C3 beta chain (C3b). This is Properdin (CFP) from Pongo abelii (Sumatran orangutan).